A 417-amino-acid polypeptide reads, in one-letter code: Histidine--tRNA ligase (417 aa).

The protein belongs to the class-II aminoacyl-tRNA synthetase family. In terms of assembly, homodimer.

It is found in the cytoplasm. It catalyses the reaction tRNA(His) + L-histidine + ATP = L-histidyl-tRNA(His) + AMP + diphosphate + H(+). This is Histidine--tRNA ligase from Nitratidesulfovibrio vulgaris (strain ATCC 29579 / DSM 644 / CCUG 34227 / NCIMB 8303 / VKM B-1760 / Hildenborough) (Desulfovibrio vulgaris).